The sequence spans 366 residues: Beta sliding clamp (366 aa).

This sequence belongs to the beta sliding clamp family. In terms of assembly, forms a ring-shaped head-to-tail homodimer around DNA which binds and tethers DNA polymerases and other proteins to the DNA. The DNA replisome complex has a single clamp-loading complex (3 tau and 1 each of delta, delta', psi and chi subunits) which binds 3 Pol III cores (1 core on the leading strand and 2 on the lagging strand) each with a beta sliding clamp dimer. Additional proteins in the replisome are other copies of gamma, psi and chi, Ssb, DNA helicase and RNA primase.

Its subcellular location is the cytoplasm. In terms of biological role, confers DNA tethering and processivity to DNA polymerases and other proteins. Acts as a clamp, forming a ring around DNA (a reaction catalyzed by the clamp-loading complex) which diffuses in an ATP-independent manner freely and bidirectionally along dsDNA. Initially characterized for its ability to contact the catalytic subunit of DNA polymerase III (Pol III), a complex, multichain enzyme responsible for most of the replicative synthesis in bacteria; Pol III exhibits 3'-5' exonuclease proofreading activity. The beta chain is required for initiation of replication as well as for processivity of DNA replication. In Haemophilus influenzae (strain ATCC 51907 / DSM 11121 / KW20 / Rd), this protein is Beta sliding clamp (dnaN).